Here is a 193-residue protein sequence, read N- to C-terminus: Recombination protein RecR (193 aa).

The C4-type; degenerate zinc-finger motif lies at 61-76 (CASCNALSETEVSEIC). Residues 84-170 (SQLCMVLHPR…TFTKIAQGVP (87 aa)) enclose the Toprim domain.

It belongs to the RecR family.

Its function is as follows. May play a role in DNA repair. It seems to be involved in an RecBC-independent recombinational process of DNA repair. It may act with RecF and RecO. This Helicobacter pylori (strain J99 / ATCC 700824) (Campylobacter pylori J99) protein is Recombination protein RecR.